The following is a 602-amino-acid chain: Aspartate--tRNA(Asp/Asn) ligase (602 aa).

Glutamate 175 serves as a coordination point for L-aspartate. The segment at glutamine 199 to lysine 202 is aspartate. Position 221 (arginine 221) interacts with L-aspartate. Residues arginine 221–glutamate 223 and glutamine 230 contribute to the ATP site. Position 458 (histidine 458) interacts with L-aspartate. Residue glutamate 492 participates in ATP binding. Arginine 499 serves as a coordination point for L-aspartate. Residue glycine 544 to arginine 547 participates in ATP binding.

Belongs to the class-II aminoacyl-tRNA synthetase family. Type 1 subfamily. As to quaternary structure, homodimer.

It localises to the cytoplasm. The catalysed reaction is tRNA(Asx) + L-aspartate + ATP = L-aspartyl-tRNA(Asx) + AMP + diphosphate. Its function is as follows. Aspartyl-tRNA synthetase with relaxed tRNA specificity since it is able to aspartylate not only its cognate tRNA(Asp) but also tRNA(Asn). Reaction proceeds in two steps: L-aspartate is first activated by ATP to form Asp-AMP and then transferred to the acceptor end of tRNA(Asp/Asn). The polypeptide is Aspartate--tRNA(Asp/Asn) ligase (Cupriavidus pinatubonensis (strain JMP 134 / LMG 1197) (Cupriavidus necator (strain JMP 134))).